The following is a 244-amino-acid chain: Vesicle-associated membrane protein-associated protein SCS2 (244 aa).

Serine 2 carries the post-translational modification N-acetylserine. At 2-222 (SAVEISPDVL…EAATVPAENE (221 aa)) the chain is on the cytoplasmic side. One can recognise an MSP domain in the interval 3 to 126 (AVEISPDVLV…ISKKIKVKYL (124 aa)). The residue at position 106 (serine 106) is a Phosphoserine. The disordered stretch occupies residues 135–219 (QNQNIQENKE…QIKEAATVPA (85 aa)). Residues 153 to 168 (SEPKEVPAVVNEKEVP) show a composition bias toward basic and acidic residues. Positions 199-211 (QTSNSTPAPQNQI) are enriched in polar residues. Residues 223–243 (SSSMGIFILVALLILVLGWFY) traverse the membrane as a helical; Anchor for type IV membrane protein segment. Residue arginine 244 is a topological domain, lumenal.

This sequence belongs to the VAMP-associated protein (VAP) (TC 9.B.17) family. Interacts with OPI1. Also interacts with PBI1. Interacts with EPO1.

The protein localises to the endoplasmic reticulum membrane. It is found in the nucleus membrane. Its function is as follows. Acts as an endoplasmic reticulum (ER) membrane anchor for cytoplasmic proteins via binding to the FFAT motif of targeted proteins. Regulates phospholipid biosynthesis by modulating the subcellular localization of the transcriptional repressor OPI1. Also contributes to the tethering of the ER to the plasma membrane. Allows interorganelle phosphatidylserine (PtdSer) transport via a process that involves the acceptor membrane complex PDR17-PDS2 that binds to PBI1 which in turn ligates to SCS2 and phosphatidic acid present in the donor membrane, forming a zone of apposition that facilitates PtdSer transfer. This is Vesicle-associated membrane protein-associated protein SCS2 from Saccharomyces cerevisiae (strain ATCC 204508 / S288c) (Baker's yeast).